Consider the following 473-residue polypeptide: MSTELFSSTREEGSSGSGPSFRSNQRKMLNLLLERDTSFTVCPDVPRTPVGKFLGDSANLSILSGGTPKRCLDLSNLSSGEITATQLTTSADLDETGHLDSSGLQEVHLAGMNHDQHLMKCSPAQLLCSTPNGLDRGHRKRDAMCSSSANKENDNGNLVDSEMKYLGSPITTVPKLDKNPNLGEDQAEEISDELMEFSLKDQEAKVSRSGLYRSPSMPENLNRPRLKQVEKFKDNTIPDKVKKKYFSGQGKLRKGLCLKKTVSLCDITITQMLEEDSNQGHLIGDFSKVCALPTVSGKHQDLKYVNPETVAALLSGKFQGLIEKFYVIDCRYPYEYLGGHIQGALNLYSQEELFNFFLKKPIVPLDTQKRIIIVFHCEFSSERGPRMCRCLREEDRSLNQYPALYYPELYILKGGYRDFFPEYMELCEPQSYCPMHHQDHKTELLRCRSQSKVQEGERQLREQIALLVKDMSP.

The tract at residues 1-23 (MSTELFSSTREEGSSGSGPSFRS) is disordered. An N-acetylserine modification is found at Ser2. 2 positions are modified to phosphoserine: Ser20 and Ser38. Phosphothreonine is present on Thr48. A phosphoserine mark is found at Ser57, Ser61, and Ser64. The residue at position 67 (Thr67) is a Phosphothreonine. Phosphoserine; by CDK1 is present on Ser122. Position 129 is a phosphoserine (Ser129). Residue Thr130 is modified to Phosphothreonine. Residues 132–158 (NGLDRGHRKRDAMCSSSANKENDNGNL) are disordered. The segment covering 145–158 (CSSSANKENDNGNL) has biased composition (polar residues). The residue at position 168 (Ser168) is a Phosphoserine. Residues Ser191 and Ser198 each carry the phosphoserine; by PLK3 modification. Ser214 is subject to Phosphoserine; by CDK1. Ser216 is modified (phosphoserine; by CHEK1, CHEK2, BRSK1, MAPK14 AND MARK3). The region spanning 321 to 428 (LIEKFYVIDC…FFPEYMELCE (108 aa)) is the Rhodanese domain. The HIV-1 Vpr binding site stretch occupies residues 334–379 (YEYLGGHIQGALNLYSQEELFNFFLKKPIVPLDTQKRIIIVFHCEF). The active site involves Cys377. Ser472 is modified (phosphoserine).

The protein belongs to the MPI phosphatase family. Interacts with MAPK14 and 14-3-3 proteins. When phosphorylated on Ser-129 and/or Thr-130, interacts with PLK1. Interacts with MARK3/C-TAK1. In terms of assembly, (Microbial infection) Interacts with HIV-1 Vpr; this interaction inactivates CDC25C phosphatase activity. Phosphorylated by CHEK1 and MAPK14 at Ser-216. This phosphorylation creates a binding site for 14-3-3 protein and inhibits the phosphatase. Phosphorylated by PLK4. Phosphorylated by PLK1, leading to activate the phosphatase activity. Phosphorylation by PLK3 at Ser-191 promotes nuclear translocation. Ser-198 is a minor phosphorylation site. Was initially reported to be phosphorylated by PLK3 at Ser-216. However, such phosphorylation by PLK3 was not confirmed by other groups. Phosphorylation at Thr-48, Thr-67, Ser-122, Thr-130, Ser-168 and Ser-214 occurs at G2 and G2-M transition and is probably catalyzed by CDK1. Ser-168 phosphorylation levels are lower than those at the other 5 CDK1 sites. Phosphorylation by CDK1 leads to increased activity.

Its subcellular location is the nucleus. It catalyses the reaction O-phospho-L-tyrosyl-[protein] + H2O = L-tyrosyl-[protein] + phosphate. Its function is as follows. Functions as a dosage-dependent inducer in mitotic control. Tyrosine protein phosphatase required for progression of the cell cycle. When phosphorylated, highly effective in activating G2 cells into prophase. Directly dephosphorylates CDK1 and activates its kinase activity. In Homo sapiens (Human), this protein is M-phase inducer phosphatase 3 (CDC25C).